Here is a 505-residue protein sequence, read N- to C-terminus: ATP synthase subunit alpha (505 aa).

The interval 118–138 is disordered; sequence VDGLGPINTTNTRPIESPAPG. 172–179 contacts ATP; sequence GDRQTGKT.

This sequence belongs to the ATPase alpha/beta chains family. In terms of assembly, F-type ATPases have 2 components, CF(1) - the catalytic core - and CF(0) - the membrane proton channel. CF(1) has five subunits: alpha(3), beta(3), gamma(1), delta(1), epsilon(1). CF(0) has three main subunits: a(1), b(2) and c(9-12). The alpha and beta chains form an alternating ring which encloses part of the gamma chain. CF(1) is attached to CF(0) by a central stalk formed by the gamma and epsilon chains, while a peripheral stalk is formed by the delta and b chains.

The protein localises to the cell membrane. The enzyme catalyses ATP + H2O + 4 H(+)(in) = ADP + phosphate + 5 H(+)(out). Its function is as follows. Produces ATP from ADP in the presence of a proton gradient across the membrane. The alpha chain is a regulatory subunit. This chain is ATP synthase subunit alpha, found in Bacillus cereus (strain ATCC 14579 / DSM 31 / CCUG 7414 / JCM 2152 / NBRC 15305 / NCIMB 9373 / NCTC 2599 / NRRL B-3711).